The sequence spans 291 residues: tRNA U34 carboxymethyltransferase (291 aa).

Carboxy-S-adenosyl-L-methionine is bound by residues K61, W75, K80, G100, 122 to 124 (DPS), 149 to 150 (VE), Y169, and R284.

Belongs to the class I-like SAM-binding methyltransferase superfamily. CmoB family. In terms of assembly, homotetramer.

It carries out the reaction carboxy-S-adenosyl-L-methionine + 5-hydroxyuridine(34) in tRNA = 5-carboxymethoxyuridine(34) in tRNA + S-adenosyl-L-homocysteine + H(+). Its function is as follows. Catalyzes carboxymethyl transfer from carboxy-S-adenosyl-L-methionine (Cx-SAM) to 5-hydroxyuridine (ho5U) to form 5-carboxymethoxyuridine (cmo5U) at position 34 in tRNAs. In Campylobacter jejuni subsp. doylei (strain ATCC BAA-1458 / RM4099 / 269.97), this protein is tRNA U34 carboxymethyltransferase.